Here is a 282-residue protein sequence, read N- to C-terminus: NADPH-dependent 7-cyano-7-deazaguanine reductase (282 aa).

Position 88-90 (88-90) interacts with substrate; that stretch reads IES. Residue 90–91 coordinates NADPH; that stretch reads SK. Cys-190 serves as the catalytic Thioimide intermediate. Asp-197 serves as the catalytic Proton donor. 229 to 230 contributes to the substrate binding site; the sequence is HE. 258 to 259 lines the NADPH pocket; sequence RG.

It belongs to the GTP cyclohydrolase I family. QueF type 2 subfamily. Homodimer.

The protein resides in the cytoplasm. It carries out the reaction 7-aminomethyl-7-carbaguanine + 2 NADP(+) = 7-cyano-7-deazaguanine + 2 NADPH + 3 H(+). The protein operates within tRNA modification; tRNA-queuosine biosynthesis. Its function is as follows. Catalyzes the NADPH-dependent reduction of 7-cyano-7-deazaguanine (preQ0) to 7-aminomethyl-7-deazaguanine (preQ1). The polypeptide is NADPH-dependent 7-cyano-7-deazaguanine reductase (Escherichia coli O9:H4 (strain HS)).